Here is a 197-residue protein sequence, read N- to C-terminus: Protein GrpE (197 aa).

The disordered stretch occupies residues methionine 1 to aspartate 41.

It belongs to the GrpE family. In terms of assembly, homodimer.

The protein resides in the cytoplasm. Participates actively in the response to hyperosmotic and heat shock by preventing the aggregation of stress-denatured proteins, in association with DnaK and GrpE. It is the nucleotide exchange factor for DnaK and may function as a thermosensor. Unfolded proteins bind initially to DnaJ; upon interaction with the DnaJ-bound protein, DnaK hydrolyzes its bound ATP, resulting in the formation of a stable complex. GrpE releases ADP from DnaK; ATP binding to DnaK triggers the release of the substrate protein, thus completing the reaction cycle. Several rounds of ATP-dependent interactions between DnaJ, DnaK and GrpE are required for fully efficient folding. The sequence is that of Protein GrpE from Enterobacter sp. (strain 638).